We begin with the raw amino-acid sequence, 379 residues long: Probable homogentisate phytyltransferase 2, chloroplastic (379 aa).

The segment at 1–39 (MASLASPPLPCRAAATASRSGRPAPRLLGPPPPPASPLL) is disordered. A chloroplast-targeting transit peptide spans 1–65 (MASLASPPLP…WSRRDAVRVC (65 aa)). 8 helical membrane-spanning segments follow: residues 121–141 (WLVF…GYIV), 174–194 (LVVL…GPFI), 195–215 (TSLY…PFRL), 220–240 (VAAF…GVYY), 252–272 (WSSP…VIAI), 299–319 (IAFL…AVAF), 328–348 (TVMV…TWVL), and 361–378 (YYRF…FFPL).

Belongs to the UbiA prenyltransferase family.

The protein resides in the plastid. It is found in the chloroplast thylakoid membrane. The enzyme catalyses phytyl diphosphate + homogentisate + H(+) = 2-methyl-6-phytyl-1,4-benzene-1,4-diol + CO2 + diphosphate. The protein operates within cofactor biosynthesis; tocopherol biosynthesis. In terms of biological role, involved in the synthesis of tocopherol (vitamin E). Catalyzes the condensation of homogentisate and phytyl diphosphate to form dimethylphytylhydrquinone. This Oryza sativa subsp. japonica (Rice) protein is Probable homogentisate phytyltransferase 2, chloroplastic (HPT2).